Reading from the N-terminus, the 97-residue chain is Glutamyl-tRNA(Gln) amidotransferase subunit C (97 aa).

This sequence belongs to the GatC family. In terms of assembly, heterotrimer of A, B and C subunits.

The catalysed reaction is L-glutamyl-tRNA(Gln) + L-glutamine + ATP + H2O = L-glutaminyl-tRNA(Gln) + L-glutamate + ADP + phosphate + H(+). It carries out the reaction L-aspartyl-tRNA(Asn) + L-glutamine + ATP + H2O = L-asparaginyl-tRNA(Asn) + L-glutamate + ADP + phosphate + 2 H(+). Its function is as follows. Allows the formation of correctly charged Asn-tRNA(Asn) or Gln-tRNA(Gln) through the transamidation of misacylated Asp-tRNA(Asn) or Glu-tRNA(Gln) in organisms which lack either or both of asparaginyl-tRNA or glutaminyl-tRNA synthetases. The reaction takes place in the presence of glutamine and ATP through an activated phospho-Asp-tRNA(Asn) or phospho-Glu-tRNA(Gln). The chain is Glutamyl-tRNA(Gln) amidotransferase subunit C from Saccharolobus solfataricus (strain ATCC 35092 / DSM 1617 / JCM 11322 / P2) (Sulfolobus solfataricus).